The chain runs to 165 residues: Glutamyl-tRNA(Gln) amidotransferase subunit F, mitochondrial (165 aa).

The N-terminal 19 residues, 1–19, are a transit peptide targeting the mitochondrion; that stretch reads MKSILRSTTRNLITSSRRF.

This sequence belongs to the GatF family. As to quaternary structure, subunit of the heterotrimeric GatFAB amidotransferase (AdT) complex, composed of A, B and F subunits.

The protein localises to the mitochondrion inner membrane. The catalysed reaction is L-glutamyl-tRNA(Gln) + L-glutamine + ATP + H2O = L-glutaminyl-tRNA(Gln) + L-glutamate + ADP + phosphate + H(+). Its function is as follows. Allows the formation of correctly charged Gln-tRNA(Gln) through the transamidation of misacylated Glu-tRNA(Gln) in the mitochondria. The reaction takes place in the presence of glutamine and ATP through an activated gamma-phospho-Glu-tRNA(Gln). Required for proper protein synthesis within the mitochondrion. This chain is Glutamyl-tRNA(Gln) amidotransferase subunit F, mitochondrial, found in Candida albicans (strain WO-1) (Yeast).